We begin with the raw amino-acid sequence, 446 residues long: Tripartite motif-containing protein 43B (446 aa).

An RING-type zinc finger spans residues 15 to 56 (CVICLNYLVDPVTICCGHSFCRPCLCLSWEEAQSPANCPACR). Residues 88–129 (SEKQICGTHRQTKKMFCDMDKSLLCLLCSNSQEHGAHKHYPI) form a B box-type zinc finger. Residues cysteine 93, histidine 96, cysteine 115, and histidine 121 each contribute to the Zn(2+) site. Coiled coils occupy residues 129-158 (IEEA…QRNL) and 190-220 (LHKE…VKMD). Positions 269-446 (ELTAGPITGL…VRPFFYTGHR (178 aa)) constitute a B30.2/SPRY domain.

It belongs to the TRIM/RBCC family.

This chain is Tripartite motif-containing protein 43B (TRIM43B), found in Homo sapiens (Human).